The chain runs to 355 residues: Uroporphyrinogen decarboxylase (355 aa).

Residues 36-40 (RQAGR), D85, Y160, S215, and H334 contribute to the substrate site.

Belongs to the uroporphyrinogen decarboxylase family. Homodimer.

It localises to the cytoplasm. It catalyses the reaction uroporphyrinogen III + 4 H(+) = coproporphyrinogen III + 4 CO2. Its pathway is porphyrin-containing compound metabolism; protoporphyrin-IX biosynthesis; coproporphyrinogen-III from 5-aminolevulinate: step 4/4. In terms of biological role, catalyzes the decarboxylation of four acetate groups of uroporphyrinogen-III to yield coproporphyrinogen-III. The sequence is that of Uroporphyrinogen decarboxylase from Rhodococcus jostii (strain RHA1).